The sequence spans 64 residues: GGDECNINEHRSPQETLPDVPHCANINLLDYEVCRTAHPQFRLPATSRTLCAGILEGGKDTCHR.

2 disulfides stabilise this stretch: Cys5-Cys23 and Cys34-Cys51.

Monomer. In terms of tissue distribution, expressed by the vanom gland.

The protein localises to the secreted. Functionally, thrombin-like snake venom serine protease. The polypeptide is Thrombin-like enzyme collinein-4 (Crotalus durissus collilineatus (Brazilian rattlesnake)).